A 209-amino-acid chain; its full sequence is MLTHLRPALTMILALTVLTGLAYPLAVTAVARLAFPEQAAGSLIHRADGTVLGSALIGQTFTRPEYFWSRPSAAGDGYDAANSSGTNLGPSNTALVAAVQARVEALKAANPDAVGPVPVDLVTASASGLDPHISPAAALWQAPRVAAARGLETGRVVELIRQATEGRVFGFLGEPSVNVLKLNLALDAQAPTPRQPEPGHPEPGRPEVR.

The helical transmembrane segment at 11 to 31 (MILALTVLTGLAYPLAVTAVA) threads the bilayer. A disordered region spans residues 188-209 (AQAPTPRQPEPGHPEPGRPEVR). Basic and acidic residues predominate over residues 197–209 (EPGHPEPGRPEVR).

Belongs to the KdpC family. In terms of assembly, the system is composed of three essential subunits: KdpA, KdpB and KdpC.

The protein localises to the cell inner membrane. Part of the high-affinity ATP-driven potassium transport (or Kdp) system, which catalyzes the hydrolysis of ATP coupled with the electrogenic transport of potassium into the cytoplasm. This subunit acts as a catalytic chaperone that increases the ATP-binding affinity of the ATP-hydrolyzing subunit KdpB by the formation of a transient KdpB/KdpC/ATP ternary complex. The chain is Potassium-transporting ATPase KdpC subunit from Rhodospirillum centenum (strain ATCC 51521 / SW).